Consider the following 1217-residue polypeptide: Sterol 3-beta-glucosyltransferase (1217 aa).

The GRAM 1 domain occupies 195-232 (EFVRKYFGISEEETLIGHYTGWLLQEVLIQGNLFITNS). A PH domain is found at 246–343 (AVVLCGKLKL…WVKCLKKQLF (98 aa)). In terms of domain architecture, GRAM 2 spans 590–656 (AKIKDWFNLH…EDIEGYNEIL (67 aa)). Positions 766, 767, 769, 1042, 1072, 1074, 1087, 1090, 1091, 1092, 1111, and 1112 each coordinate UDP-alpha-D-glucose.

The protein belongs to the glycosyltransferase 28 family.

Its subcellular location is the cytoplasm. The protein localises to the membrane. It catalyses the reaction a sterol + UDP-alpha-D-glucose = a sterol 3-beta-D-glucoside + UDP + H(+). It carries out the reaction ergosterol + UDP-alpha-D-glucose = ergosteryl 3-beta-D-glucoside + UDP + H(+). Its function is as follows. Sterol glycosyltransferase responsible for the glycosylation of ergosterol to form ergosterol-glucoside. This Vanderwaltozyma polyspora (strain ATCC 22028 / DSM 70294 / BCRC 21397 / CBS 2163 / NBRC 10782 / NRRL Y-8283 / UCD 57-17) (Kluyveromyces polysporus) protein is Sterol 3-beta-glucosyltransferase.